The sequence spans 3387 residues: Genome polyprotein (3387 aa).

Residues 1–100 (MNQRKKVVRP…LNILNGRKRS (100 aa)) lie on the Cytoplasmic side of the membrane. The hydrophobic; homodimerization of capsid protein C stretch occupies residues 36–71 (LFSGKGPLRMVLAFITFLRVLSIPPTAGILKRWGQL). Residues 100-113 (STMTLLCLIPTAMA) constitute a propeptide, ER anchor for the capsid protein C, removed in mature form by serine protease NS3. A helical membrane pass occupies residues 101-117 (TMTLLCLIPTAMAFHLS). The Extracellular portion of the chain corresponds to 118–237 (TRDGEPLMIV…GAWKHAQRVE (120 aa)). A glycan (N-linked (GlcNAc...) asparagine; by host) is linked at Asn182. Residues 238–258 (SWILRNPGFALLAGFMAYMIG) traverse the membrane as a helical segment. Topologically, residues 259–265 (QTGIQRT) are cytoplasmic. The chain crosses the membrane as a helical span at residues 266–279 (VFFVLMMLVAPSYG). Over 280–723 (MRCVGVGNRD…AVHQVFGSVY (444 aa)) the chain is Extracellular. 6 disulfide bridges follow: Cys282/Cys309, Cys339/Cys400, Cys353/Cys384, Cys371/Cys395, Cys464/Cys564, and Cys581/Cys612. N-linked (GlcNAc...) asparagine; by host glycosylation occurs at Asn346. Positions 377–390 (DRGWGNGCGLFGKG) are fusion peptide. The helical transmembrane segment at 724–746 (TTMFGGVSWMVRILIGFLVLWIG) threads the bilayer. At 747-750 (TNSR) the chain is on the cytoplasmic side. The chain crosses the membrane as a helical span at residues 751–771 (NTSMAMTCIAVGGITLFLGFT). At 772–1194 (VHADTGCAVS…MLGDTMSGRM (423 aa)) the chain is on the extracellular side. Cystine bridges form between Cys778-Cys789, Cys829-Cys917, Cys953-Cys997, Cys1054-Cys1103, Cys1065-Cys1087, and Cys1086-Cys1090. N-linked (GlcNAc...) asparagine; by host glycans are attached at residues Asn904 and Asn981. A helical membrane pass occupies residues 1195-1218 (GGQIHLAIMAVFKMSPGYVLGIFL). Residues 1219–1224 (RKLTSR) lie on the Lumenal side of the membrane. A helical transmembrane segment spans residues 1225–1243 (ETALMVIGMAMTTVLSIPH). Residues 1244 to 1267 (DLMEFIDGISLGLILLKMVTHFDN) lie on the Cytoplasmic side of the membrane. Residues 1268–1288 (TQVGTLALSLTFIRSTMPLVM) form a helical membrane-spanning segment. Residue Ala1289 is a topological domain, lumenal. A helical transmembrane segment spans residues 1290-1308 (WRTIMAVLFVVTLIPLCRT). Residues 1309–1316 (SCLQKQSH) are Lumenal-facing. The helical transmembrane segment at 1317 to 1337 (WVEITALILGAQALPVYLMTL) threads the bilayer. At 1338 to 1345 (MKGASKRS) the chain is on the cytoplasmic side. Residues 1346–1366 (WPLNEGIMAVGLVSLLGSALL) traverse the membrane as a helical segment. Over 1367–1369 (KND) the chain is Lumenal. A helical membrane pass occupies residues 1370 to 1390 (VPLAGPMVAGGLLLAAYVMSG). Residues 1391–1437 (SSADLSLEKAANVQWDEMADITGSSPIIEVKQDEDGSFSIRDIEETN) lie on the Cytoplasmic side of the membrane. The interacts with and activates NS3 protease stretch occupies residues 1397–1436 (LEKAANVQWDEMADITGSSPIIEVKQDEDGSFSIRDIEET). Positions 1438 to 1458 (MITLLVKLALITVSGLYPLAI) form an intramembrane region, helical. Over 1459–2146 (PVTMTLWYMW…LNELPESLET (688 aa)) the chain is Cytoplasmic. A Peptidase S7 domain is found at 1475-1652 (SGALWDVPSP…ERTGEPDYEV (178 aa)). Active-site charge relay system; for serine protease NS3 activity residues include His1525, Asp1549, and Ser1609. One can recognise a Helicase ATP-binding domain in the interval 1654–1810 (EDIFRKKRLT…QSNSPIEDIE (157 aa)). The tract at residues 1658–1661 (RKKR) is important for RNA-binding. Position 1667-1674 (1667-1674 (LHPGAGKT)) interacts with ATP. The DEAH box motif lies at 1758 to 1761 (DEAH). Residues 1820 to 1987 (TGFDWITDYQ…IIPTLFGPER (168 aa)) enclose the Helicase C-terminal domain. Lys1862 is subject to N6-acetyllysine; by host. The helical transmembrane segment at 2147 to 2167 (LMLVALLGAMTAGIFLFFMQG) threads the bilayer. Residues 2168–2169 (KG) lie on the Lumenal side of the membrane. Positions 2170 to 2190 (IGKLSMGLIAIAVASGLLWVA) form an intramembrane region, helical. Residue Glu2191 is a topological domain, lumenal. Residues 2192–2212 (IQPQWIAASIILEFFLMVLLI) traverse the membrane as a helical segment. At 2213 to 2225 (PEPEKQRTPQDNQ) the chain is on the cytoplasmic side. A helical membrane pass occupies residues 2226-2246 (LIYVILTILTIIGLIAANEMG). The Lumenal segment spans residues 2247–2270 (LIEKTKTDFGFYQVKTETTILDVD). The helical intramembrane region spans 2271–2291 (LRPASAWTLYAVATTILTPML). Over 2292–2301 (RHTIENTSAN) the chain is Lumenal. N-linked (GlcNAc...) asparagine; by host glycosylation is found at Asn2297 and Asn2301. The helical intramembrane region spans 2302–2322 (LSLAAIANQAAVLMGLGKGWP). At 2323–2343 (LHRMDLGVPLLAMGCYSQVNP) the chain is on the lumenal side. The chain crosses the membrane as a helical span at residues 2344–2364 (TTLIASLVMLLVHYAIIGPGL). Residues 2365-2409 (QAKATREAQKRTAAGIMKNPTVDGITVIDLEPISYDPKFEKQLGQ) lie on the Cytoplasmic side of the membrane. The chain crosses the membrane as a helical span at residues 2410–2430 (VMLLVLCAGQLLLMRTTWAFC). Residues 2431 to 2455 (EVLTLATGPVLTLWEGNPGRFWNTT) lie on the Lumenal side of the membrane. Asn2453 carries an N-linked (GlcNAc...) asparagine; by host glycan. Residues 2456-2476 (IAVSTANIFRGSYLAGAGLAF) form a helical membrane-spanning segment. The Cytoplasmic segment spans residues 2477–3387 (SLIKNAQTPR…SAPFESEGVL (911 aa)). The mRNA cap 0-1 NS5-type MT domain occupies 2489 to 2751 (TGTTGETLGE…DVDLGAGTRS (263 aa)). Residue Ser2543 coordinates S-adenosyl-L-methionine. At Ser2543 the chain carries Phosphoserine. The For 2'-O-MTase activity role is filled by Lys2548. The SUMO-interacting motif signature appears at 2564-2567 (VVDL). Positions 2573, 2574, 2591, 2592, 2618, and 2619 each coordinate S-adenosyl-L-methionine. The active-site For 2'-O-MTase activity is the Asp2633. Position 2634 (Ile2634) interacts with S-adenosyl-L-methionine. Active-site for 2'-O-MTase activity residues include Lys2668 and Glu2704. Tyr2706 contributes to the S-adenosyl-L-methionine binding site. Positions 2925, 2929, 2934, and 2937 each coordinate Zn(2+). Residues 3016–3166 (LIYADDTAGW…PLDERFSTSL (151 aa)) enclose the RdRp catalytic domain. The Zn(2+) site is built by His3200, Cys3216, and Cys3335.

The protein in the N-terminal section; belongs to the class I-like SAM-binding methyltransferase superfamily. mRNA cap 0-1 NS5-type methyltransferase family. As to quaternary structure, homodimer. Interacts (via N-terminus) with host EXOC1 (via C-terminus); this interaction results in EXOC1 degradation through the proteasome degradation pathway. In terms of assembly, forms heterodimers with envelope protein E in the endoplasmic reticulum and Golgi. Homodimer; in the endoplasmic reticulum and Golgi. Interacts with protein prM. Interacts with non-structural protein 1. As to quaternary structure, homodimer; Homohexamer when secreted. Interacts with envelope protein E. In terms of assembly, interacts (via N-terminus) with serine protease NS3. Forms a heterodimer with serine protease NS3. May form homooligomers. As to quaternary structure, forms a heterodimer with NS2B. Interacts with NS4B. Interacts with unphosphorylated RNA-directed RNA polymerase NS5; this interaction stimulates RNA-directed RNA polymerase NS5 guanylyltransferase activity. In terms of assembly, interacts with host MAVS; this interaction inhibits the synthesis of IFN-beta. Interacts with host AUP1; the interaction occurs in the presence of Dengue virus NS4B and induces lipophagy which facilitates production of virus progeny particles. Interacts with serine protease NS3. As to quaternary structure, homodimer. Interacts with host STAT2; this interaction inhibits the phosphorylation of the latter, and, when all viral proteins are present (polyprotein), targets STAT2 for degradation. Interacts with serine protease NS3. Interacts with host PAF1 complex; the interaction may prevent the recruitment of the PAF1 complex to interferon-responsive genes, and thus reduces the immune response. Post-translationally, specific enzymatic cleavages in vivo yield mature proteins. Cleavages in the lumen of endoplasmic reticulum are performed by host signal peptidase, whereas cleavages in the cytoplasmic side are performed by serine protease NS3. Signal cleavage at the 2K-4B site requires a prior NS3 protease-mediated cleavage at the 4A-2K site. In terms of processing, cleaved in post-Golgi vesicles by a host furin, releasing the mature small envelope protein M, and peptide pr. This cleavage is incomplete as up to 30% of viral particles still carry uncleaved prM. N-glycosylated. Post-translationally, N-glycosylated. The excreted form is glycosylated and this is required for efficient secretion of the protein from infected cells. In terms of processing, acetylated by host KAT5. Acetylation modulates NS3 RNA-binding and unwinding activities and plays an important positive role for viral replication. Sumoylation of RNA-directed RNA polymerase NS5 increases NS5 protein stability allowing proper viral RNA replication. Post-translationally, phosphorylated on serines residues. This phosphorylation may trigger NS5 nuclear localization.

The protein resides in the virion. It localises to the host nucleus. The protein localises to the host cytoplasm. Its subcellular location is the host perinuclear region. It is found in the secreted. The protein resides in the virion membrane. It localises to the host endoplasmic reticulum membrane. The protein localises to the host mitochondrion. The catalysed reaction is Selective hydrolysis of -Xaa-Xaa-|-Yaa- bonds in which each of the Xaa can be either Arg or Lys and Yaa can be either Ser or Ala.. It catalyses the reaction RNA(n) + a ribonucleoside 5'-triphosphate = RNA(n+1) + diphosphate. The enzyme catalyses a ribonucleoside 5'-triphosphate + H2O = a ribonucleoside 5'-diphosphate + phosphate + H(+). It carries out the reaction ATP + H2O = ADP + phosphate + H(+). The catalysed reaction is a 5'-end (5'-triphosphoguanosine)-ribonucleoside in mRNA + S-adenosyl-L-methionine = a 5'-end (N(7)-methyl 5'-triphosphoguanosine)-ribonucleoside in mRNA + S-adenosyl-L-homocysteine. It catalyses the reaction a 5'-end (N(7)-methyl 5'-triphosphoguanosine)-ribonucleoside in mRNA + S-adenosyl-L-methionine = a 5'-end (N(7)-methyl 5'-triphosphoguanosine)-(2'-O-methyl-ribonucleoside) in mRNA + S-adenosyl-L-homocysteine + H(+). Plays a role in virus budding by binding to the cell membrane and gathering the viral RNA into a nucleocapsid that forms the core of a mature virus particle. During virus entry, may induce genome penetration into the host cytoplasm after hemifusion induced by the surface proteins. Can migrate to the cell nucleus where it modulates host functions. Overcomes the anti-viral effects of host EXOC1 by sequestering and degrading the latter through the proteasome degradation pathway. Its function is as follows. Inhibits RNA silencing by interfering with host Dicer. Functionally, prevents premature fusion activity of envelope proteins in trans-Golgi by binding to envelope protein E at pH6.0. After virion release in extracellular space, gets dissociated from E dimers. In terms of biological role, acts as a chaperone for envelope protein E during intracellular virion assembly by masking and inactivating envelope protein E fusion peptide. prM is the only viral peptide matured by host furin in the trans-Golgi network probably to avoid catastrophic activation of the viral fusion activity in acidic Golgi compartment prior to virion release. prM-E cleavage is inefficient, and many virions are only partially matured. These uncleaved prM would play a role in immune evasion. May play a role in virus budding. Exerts cytotoxic effects by activating a mitochondrial apoptotic pathway through M ectodomain. May display a viroporin activity. Its function is as follows. Binds to host cell surface receptor and mediates fusion between viral and cellular membranes. Envelope protein is synthesized in the endoplasmic reticulum in the form of heterodimer with protein prM. They play a role in virion budding in the ER, and the newly formed immature particle is covered with 60 spikes composed of heterodimer between precursor prM and envelope protein E. The virion is transported to the Golgi apparatus where the low pH causes dissociation of PrM-E heterodimers and formation of E homodimers. prM-E cleavage is inefficient, and many virions are only partially matured. These uncleaved prM would play a role in immune evasion. Functionally, involved in immune evasion, pathogenesis and viral replication. Once cleaved off the polyprotein, is targeted to three destinations: the viral replication cycle, the plasma membrane and the extracellular compartment. Essential for viral replication. Required for formation of the replication complex and recruitment of other non-structural proteins to the ER-derived membrane structures. Excreted as a hexameric lipoparticle that plays a role against host immune response. Antagonizing the complement function. Binds to the host macrophages and dendritic cells. Inhibits signal transduction originating from Toll-like receptor 3 (TLR3). In terms of biological role, disrupts the host endothelial glycocalyx layer of host pulmonary microvascular endothelial cells, inducing degradation of sialic acid and shedding of heparan sulfate proteoglycans. NS1 induces expression of sialidases, heparanase, and activates cathepsin L, which activates heparanase via enzymatic cleavage. These effects are probably linked to the endothelial hyperpermeability observed in severe dengue disease. Component of the viral RNA replication complex that functions in virion assembly and antagonizes the host immune response. Its function is as follows. Required cofactor for the serine protease function of NS3. May have membrane-destabilizing activity and form viroporins. Functionally, displays three enzymatic activities: serine protease, NTPase and RNA helicase. NS3 serine protease, in association with NS2B, performs its autocleavage and cleaves the polyprotein at dibasic sites in the cytoplasm: C-prM, NS2A-NS2B, NS2B-NS3, NS3-NS4A, NS4A-2K and NS4B-NS5. NS3 RNA helicase binds RNA and unwinds dsRNA in the 3' to 5' direction. In terms of biological role, regulates the ATPase activity of the NS3 helicase activity. NS4A allows NS3 helicase to conserve energy during unwinding. Plays a role in the inhibition of the host innate immune response. Interacts with host MAVS and thereby prevents the interaction between RIGI and MAVS. In turn, IFN-beta production is impaired. Interacts with host AUP1 which mediates induction of lipophagy in host cells and facilitates production of virus progeny particles. Functions as a signal peptide for NS4B and is required for the interferon antagonism activity of the latter. Its function is as follows. Induces the formation of ER-derived membrane vesicles where the viral replication takes place. Inhibits interferon (IFN)-induced host STAT1 phosphorylation and nuclear translocation, thereby preventing the establishment of cellular antiviral state by blocking the IFN-alpha/beta pathway. Functionally, replicates the viral (+) and (-) RNA genome, and performs the capping of genomes in the cytoplasm. NS5 methylates viral RNA cap at guanine N-7 and ribose 2'-O positions. Besides its role in RNA genome replication, also prevents the establishment of cellular antiviral state by blocking the interferon-alpha/beta (IFN-alpha/beta) signaling pathway. Inhibits host TYK2 and STAT2 phosphorylation, thereby preventing activation of JAK-STAT signaling pathway. May reduce immune responses by preventing the recruitment of the host PAF1 complex to interferon-responsive genes. In Aedes aegypti (Yellowfever mosquito), this protein is Genome polyprotein.